Reading from the N-terminus, the 253-residue chain is Sulfate transporter CysZ (253 aa).

4 helical membrane-spanning segments follow: residues 31–51, 75–95, 151–171, and 222–242; these read FVIL…WWLF, LLWP…FSTI, IVLL…PVLW, and IPLL…AMWV.

This sequence belongs to the CysZ family.

It localises to the cell inner membrane. High affinity, high specificity proton-dependent sulfate transporter, which mediates sulfate uptake. Provides the sulfur source for the cysteine synthesis pathway. The polypeptide is Sulfate transporter CysZ (Shigella dysenteriae serotype 1 (strain Sd197)).